Reading from the N-terminus, the 288-residue chain is Protoheme IX farnesyltransferase (288 aa).

Helical transmembrane passes span Ala8 to Ala28, Tyr35 to Leu55, Ile80 to Leu100, Leu107 to Met127, Ile132 to Ala152, Leu162 to Leu182, Ile208 to Thr228, Thr229 to Leu249, and Phe266 to Phe286.

It belongs to the UbiA prenyltransferase family. Protoheme IX farnesyltransferase subfamily.

It is found in the cell membrane. It catalyses the reaction heme b + (2E,6E)-farnesyl diphosphate + H2O = Fe(II)-heme o + diphosphate. The protein operates within porphyrin-containing compound metabolism; heme O biosynthesis; heme O from protoheme: step 1/1. Its function is as follows. Converts heme B (protoheme IX) to heme O by substitution of the vinyl group on carbon 2 of heme B porphyrin ring with a hydroxyethyl farnesyl side group. In Baumannia cicadellinicola subsp. Homalodisca coagulata, this protein is Protoheme IX farnesyltransferase.